Reading from the N-terminus, the 369-residue chain is Anhydro-N-acetylmuramic acid kinase (369 aa).

12-19 (GTSMDGVD) is an ATP binding site.

This sequence belongs to the anhydro-N-acetylmuramic acid kinase family.

It carries out the reaction 1,6-anhydro-N-acetyl-beta-muramate + ATP + H2O = N-acetyl-D-muramate 6-phosphate + ADP + H(+). It participates in amino-sugar metabolism; 1,6-anhydro-N-acetylmuramate degradation. The protein operates within cell wall biogenesis; peptidoglycan recycling. Its function is as follows. Catalyzes the specific phosphorylation of 1,6-anhydro-N-acetylmuramic acid (anhMurNAc) with the simultaneous cleavage of the 1,6-anhydro ring, generating MurNAc-6-P. Is required for the utilization of anhMurNAc either imported from the medium or derived from its own cell wall murein, and thus plays a role in cell wall recycling. The protein is Anhydro-N-acetylmuramic acid kinase of Shewanella baltica (strain OS155 / ATCC BAA-1091).